A 332-amino-acid chain; its full sequence is MKHYHQHYSSFWPKLEEARLGHWQNALEAALETALDPDANGNLPKWLPALETVMAFPSSDSAELSQSAIKAHSQPFSEDDKEKLTQALKAFMPWRKGPFEIEGIYIDTEWHSDWKWDRVSPHLSSLKGRKVLDIGCGSGYHLWRMLGDGAELALGVDPGLLFMTQFLAIKHFVGESLPAYFLPLTLEQLPKTQPSEVFDTVFSMGVLYHRRSPIDHIMDLKRYLKPGGELVLETLVIPDAQGQLLVPKERYAQMNNVWFIPSVQELGHWLEKCGFKNVRCVDLDQTSVKEQRTTEWMNWNSLADFLDPNDSNKTIEGYSAPLRAVMIADKPC.

Carboxy-S-adenosyl-L-methionine contacts are provided by residues Lys-96, Trp-110, Lys-115, Gly-135, Leu-186 to Glu-187, Met-204, Tyr-208, and Arg-323.

It belongs to the class I-like SAM-binding methyltransferase superfamily. CmoB family. Homotetramer.

The catalysed reaction is carboxy-S-adenosyl-L-methionine + 5-hydroxyuridine(34) in tRNA = 5-carboxymethoxyuridine(34) in tRNA + S-adenosyl-L-homocysteine + H(+). Functionally, catalyzes carboxymethyl transfer from carboxy-S-adenosyl-L-methionine (Cx-SAM) to 5-hydroxyuridine (ho5U) to form 5-carboxymethoxyuridine (cmo5U) at position 34 in tRNAs. This is tRNA U34 carboxymethyltransferase from Hydrogenovibrio crunogenus (strain DSM 25203 / XCL-2) (Thiomicrospira crunogena).